The chain runs to 884 residues: Protein argonaute-4 (884 aa).

A PAZ domain is found at P242–A361. One can recognise a Piwi domain in the interval L532–V843. Residues D848 to A870 are disordered.

This sequence belongs to the argonaute family. Ago subfamily.

The protein resides in the cytoplasm. It localises to the P-body. Its function is as follows. Required for RNA-mediated gene silencing (RNAi). Binds to short RNAs such as microRNAs (miRNAs) and represses the translation of mRNAs which are complementary to them. Lacks endonuclease activity and does not appear to cleave target mRNAs. The chain is Protein argonaute-4 (ago4) from Xenopus laevis (African clawed frog).